Here is a 274-residue protein sequence, read N- to C-terminus: MKLEKDNAMDRADTLEQQNKEANNRAEKSEEEVHNLQKRMQQLENDLDQVQESLLKANNQLVEKDKALSNAEGEVAALNRRIQLLEEDLERSEERLNTATTKLAEASQAADESERMRKVLENRSLSDEERMDALENQLKEARFLAEEADRKYDEVARKLAMVEADLERAEERAETGESKIVELEEELRVVGNNLKSLEVSEEKANQREEAYKEQIKTLTNKLKAAEARAEFAERSVQKLQKEVDRLEDELVNEKEKYKSITDELDQTFSELSGY.

The span at 1–35 shows a compositional bias: basic and acidic residues; that stretch reads MKLEKDNAMDRADTLEQQNKEANNRAEKSEEEVHN. A disordered region spans residues 1 to 45; that stretch reads MKLEKDNAMDRADTLEQQNKEANNRAEKSEEEVHNLQKRMQQLEN. Residues 1–274 are a coiled coil; it reads MKLEKDNAMD…DQTFSELSGY (274 aa).

This sequence belongs to the tropomyosin family. Homodimer.

Its function is as follows. Tropomyosin, in association with the troponin complex, plays a central role in the calcium dependent regulation of muscle contraction. This is Tropomyosin from Metapenaeus ensis (Greasyback shrimp).